Consider the following 505-residue polypeptide: Probable inorganic carbon transporter subunit DabB (505 aa).

Transmembrane regions (helical) follow at residues 9–29 (SLLTLFFIMLMASGISGLLFL), 37–57 (FVRIHIGILALPLLVSLLILA), 68–88 (WHLDSLACLMTFFVLAIGFII), 105–123 (YFTLFTFTTGAASMTWLSG), 162–182 (LFLLSWFSLFFAMMWLFHATG), 204–224 (TGIQLLIVLAVIIPAAQWPFQ), 231–251 (IVAPTPVSAIMHAGLVNAGGI), 259–279 (LFHGGIASIILLLLASISVLI), 303–323 (GFMLIQCALGAYIAAIIHLIL), 355–375 (LWVMAGRILSLVIGVAFWLTA), 382–402 (LISALILGWSLSVSWDQLVAF), 410–430 (IAGLTVLGGAALVYFIIHHLF), and 446–466 (MSAVMIVVCLLLFGSALGTWV).

Belongs to the inorganic carbon transporter (TC 9.A.2) DabB family. In terms of assembly, forms a complex with DabA.

The protein localises to the cell membrane. Functionally, part of an energy-coupled inorganic carbon pump. The sequence is that of Probable inorganic carbon transporter subunit DabB from Bacillus subtilis (strain 168).